Consider the following 539-residue polypeptide: Eukaryotic translation initiation factor 3 subunit L (539 aa).

Positions 306-514 (TFSDILLYIQ…IHIADTKVSH (209 aa)) constitute a PCI domain.

This sequence belongs to the eIF-3 subunit L family. Component of the eukaryotic translation initiation factor 3 (eIF-3) complex. The eIF-3 complex interacts with pix.

It localises to the cytoplasm. Component of the eukaryotic translation initiation factor 3 (eIF-3) complex, which is involved in protein synthesis of a specialized repertoire of mRNAs and, together with other initiation factors, stimulates binding of mRNA and methionyl-tRNAi to the 40S ribosome. The eIF-3 complex specifically targets and initiates translation of a subset of mRNAs involved in cell proliferation. This chain is Eukaryotic translation initiation factor 3 subunit L, found in Drosophila melanogaster (Fruit fly).